A 765-amino-acid chain; its full sequence is uncharacterized protein (765 aa).

This is an uncharacterized protein from Methanocaldococcus jannaschii (strain ATCC 43067 / DSM 2661 / JAL-1 / JCM 10045 / NBRC 100440) (Methanococcus jannaschii).